Here is a 231-residue protein sequence, read N- to C-terminus: uncharacterized protein (231 aa).

The segment at 43 to 76 (YKVKVDLDNNYFGLCTCQYKYNCKHAYALIEAYE) adopts an SWIM-type zinc-finger fold.

This is an uncharacterized protein from Methanocaldococcus jannaschii (strain ATCC 43067 / DSM 2661 / JAL-1 / JCM 10045 / NBRC 100440) (Methanococcus jannaschii).